The chain runs to 93 residues: YcgL domain-containing protein Spea_2443 (93 aa).

A YcgL domain is found at 1 to 85 (MICAVYKSLR…PVVNLLEQHK (85 aa)).

This Shewanella pealeana (strain ATCC 700345 / ANG-SQ1) protein is YcgL domain-containing protein Spea_2443.